Consider the following 747-residue polypeptide: MAAGVLPQNEDPYSTLVNSSGHAAHMDENSGRPAPKYTKVGERLRHVIPGHMACSMACGGRACKYENPARWSEQEQAIKGVYSSWVTDNILAMARPSSELLEKYRIIEQFLGQGIKTIINLQRPGEHASCGSALEQESGFTYLPEAFMEAGIYFYNFGWKDYGVASLTAILDMVKVMTFALQEGKVAVHCHAGLGRTGVLIACYLVFATRMTADQAIIFVRAKRPNSIQTRGQLLCVREFTQFLAPLRNIFSCCDPKAHAVTLAQYLIRQRHLLHGYEARLLKYVPKIIHLVCKLLLDLAENRPVVMKSMLEGPVLSAEIEKTVSEMVTLQLDQELLRQNSDVPDPFNPTAEVAEFENQDVILSTEQEFDPLWKRRDIECLQPLTHLKRQLSYSDSDLKRAKAILEQGETPWTVPAQELLDHSLQHQKPTSHCYMPPTPELGFNKEALVQNTFSFWTPSKCGGLEGLKDEGSLLLCRKDIPKEVQRSRTFSVGVSCSHNPGEPVPPNFTSIHKDPEQVTHCRCEAPGGWVPGPVHEMVRSPCSPLNCGSSPKAQFPHGQETQDSTDLSEAVPHAGLQPELSAEARRILAAKALANLNEFVEKEEVKRKVEMWQKELNSREEAWERICGERDPFILCSLMWSWVEQLKEPVITKEDVDMLVDRQADAAEALFLLEKGQYQTILCVLHCIVSLQTLPMEVEEACLLHAIKAFTKVNFDSENGPIVYDTLKKIFKHTLEEKRKMAKDSLS.

The interval Met-1–Lys-36 is disordered. Over residues Asp-11–Gly-21 the composition is skewed to polar residues. In terms of domain architecture, Tyrosine-protein phosphatase spans Tyr-82–Cys-253. Cys-190 functions as the Phosphocysteine intermediate in the catalytic mechanism. Phosphoserine occurs at positions 392, 394, and 543. Residues Ser-549–Ala-570 are disordered.

Belongs to the protein-tyrosine phosphatase family. Non-receptor class PTPDC1 subfamily.

In terms of biological role, may play roles in cilia formation and/or maintenance. This Mus musculus (Mouse) protein is Protein tyrosine phosphatase domain-containing protein 1 (Ptpdc1).